A 389-amino-acid chain; its full sequence is Metal tolerance protein 2 (389 aa).

Residues 1 to 81 lie on the Cytoplasmic side of the membrane; it reads MGFRLAHLAA…GGEASERIFR (81 aa). Residues 82–102 form a helical membrane-spanning segment; it reads LGLAADVVLTVGKAVTGYLSG. Topologically, residues 103 to 104 are vacuolar; it reads ST. A helical transmembrane segment spans residues 105 to 125; sequence AIAADAAHSLSDIVLSGVALL. Residues 126–148 are Cytoplasmic-facing; it reads SYKAAKAPRDKEHPYGHGKFESL. Residues 149-169 form a helical membrane-spanning segment; the sequence is GALGISSMLLVTAGGIAWHAF. The Vacuolar portion of the chain corresponds to 170–206; the sequence is DVLQGVMSSAPDIIGNVSHAHHSHGSSGHHHGIDLEH. Residues 207-227 form a helical membrane-spanning segment; the sequence is PILALSVTAFAISVKEGLYWI. At 228 to 250 the chain is on the cytoplasmic side; sequence TKRAGEKEGSGLMKANAWHHRSD. A helical transmembrane segment spans residues 251-271; sequence AISSVVALLGVGGSILGVPYL. Residues 272–275 are Vacuolar-facing; sequence DPLA. Residues 276-296 traverse the membrane as a helical segment; the sequence is GLVVSGMILKAGVHTGYESVL. Over 297-389 the chain is Cytoplasmic; the sequence is ELVDAAVDPS…SLQPLNQNAL (93 aa).

The protein belongs to the cation diffusion facilitator (CDF) transporter (TC 2.A.4) family. SLC30A subfamily.

Its subcellular location is the vacuole membrane. In terms of biological role, involved in sequestration of excess metal in the cytoplasm into vacuoles to maintain metal homeostasis. The polypeptide is Metal tolerance protein 2 (MTP2) (Oryza sativa subsp. japonica (Rice)).